The primary structure comprises 77 residues: Large ribosomal subunit protein eL13 (77 aa).

Belongs to the eukaryotic ribosomal protein eL13 family.

In Sulfurisphaera tokodaii (strain DSM 16993 / JCM 10545 / NBRC 100140 / 7) (Sulfolobus tokodaii), this protein is Large ribosomal subunit protein eL13.